The primary structure comprises 141 residues: Hemoglobin subunit alpha-D (141 aa).

The Globin domain maps to 1-141 (VLTHEDCELL…VGDMLAEKYR (141 aa)). Heme b-binding residues include His58 and His87.

It belongs to the globin family. As to quaternary structure, there are three forms of hemoglobin in Sphenodon: A, A' and D. Hb A is a tetramer of two alpha-A and two beta-1, Hb A' is a tetramer of two alpha-a and two beta-2, Hb D is a tetramer of two alpha-D and two beta-2. Red blood cells.

Involved in oxygen transport from the lung to the various peripheral tissues. The chain is Hemoglobin subunit alpha-D (HBAD) from Sphenodon punctatus (Tuatara).